The chain runs to 556 residues: (-)-alpha-pinene synthase (556 aa).

Residues D309, D313, D453, and E461 each coordinate Mg(2+). A DDXXD motif motif is present at residues 309-313 (DDMYD).

This sequence belongs to the terpene synthase family. Tpsa subfamily. Mg(2+) is required as a cofactor. Mn(2+) serves as cofactor. In terms of tissue distribution, expressed in ripe fruits and roots. Not detected in vegetative tissues.

Its subcellular location is the cytoplasm. It localises to the cytosol. It carries out the reaction (2E)-geranyl diphosphate = (1S,5S)-alpha-pinene + diphosphate. It functions in the pathway secondary metabolite biosynthesis; terpenoid biosynthesis. Monoterpene synthase catalyzing the production of (-)-alpha-pinene, beta-phellandrene and beta-myrcene as the major products. Unable to use farnesyl diphosphate as substrate. Exclusively expressed in the fruit of wild strawberries. Not detected in cultivated varieties. This Fragaria vesca (Woodland strawberry) protein is (-)-alpha-pinene synthase.